The following is a 195-amino-acid chain: Pyridoxal 5'-phosphate synthase subunit PdxT (195 aa).

46-48 is a binding site for L-glutamine; that stretch reads GES. Cys-78 functions as the Nucleophile in the catalytic mechanism. Residues Arg-107 and 135–136 contribute to the L-glutamine site; that span reads IR. Residues His-172 and Glu-174 each act as charge relay system in the active site.

This sequence belongs to the glutaminase PdxT/SNO family. In the presence of PdxS, forms a dodecamer of heterodimers. Only shows activity in the heterodimer.

The catalysed reaction is aldehydo-D-ribose 5-phosphate + D-glyceraldehyde 3-phosphate + L-glutamine = pyridoxal 5'-phosphate + L-glutamate + phosphate + 3 H2O + H(+). It carries out the reaction L-glutamine + H2O = L-glutamate + NH4(+). The protein operates within cofactor biosynthesis; pyridoxal 5'-phosphate biosynthesis. Its function is as follows. Catalyzes the hydrolysis of glutamine to glutamate and ammonia as part of the biosynthesis of pyridoxal 5'-phosphate. The resulting ammonia molecule is channeled to the active site of PdxS. The chain is Pyridoxal 5'-phosphate synthase subunit PdxT from Corynebacterium jeikeium (strain K411).